A 1064-amino-acid chain; its full sequence is Error-prone DNA polymerase (1064 aa).

The protein belongs to the DNA polymerase type-C family. DnaE2 subfamily.

The protein resides in the cytoplasm. The enzyme catalyses DNA(n) + a 2'-deoxyribonucleoside 5'-triphosphate = DNA(n+1) + diphosphate. Its function is as follows. DNA polymerase involved in damage-induced mutagenesis and translesion synthesis (TLS). It is not the major replicative DNA polymerase. The sequence is that of Error-prone DNA polymerase from Azoarcus sp. (strain BH72).